The sequence spans 479 residues: Aspartyl/glutamyl-tRNA(Asn/Gln) amidotransferase subunit B (479 aa).

This sequence belongs to the GatB/GatE family. GatB subfamily. In terms of assembly, heterotrimer of A, B and C subunits.

It catalyses the reaction L-glutamyl-tRNA(Gln) + L-glutamine + ATP + H2O = L-glutaminyl-tRNA(Gln) + L-glutamate + ADP + phosphate + H(+). The enzyme catalyses L-aspartyl-tRNA(Asn) + L-glutamine + ATP + H2O = L-asparaginyl-tRNA(Asn) + L-glutamate + ADP + phosphate + 2 H(+). In terms of biological role, allows the formation of correctly charged Asn-tRNA(Asn) or Gln-tRNA(Gln) through the transamidation of misacylated Asp-tRNA(Asn) or Glu-tRNA(Gln) in organisms which lack either or both of asparaginyl-tRNA or glutaminyl-tRNA synthetases. The reaction takes place in the presence of glutamine and ATP through an activated phospho-Asp-tRNA(Asn) or phospho-Glu-tRNA(Gln). The protein is Aspartyl/glutamyl-tRNA(Asn/Gln) amidotransferase subunit B of Streptococcus suis (strain 98HAH33).